A 181-amino-acid chain; its full sequence is ATP-dependent protease subunit HslV (181 aa).

Threonine 7 is a catalytic residue. 3 residues coordinate Na(+): alanine 162, cysteine 165, and threonine 168.

It belongs to the peptidase T1B family. HslV subfamily. As to quaternary structure, a double ring-shaped homohexamer of HslV is capped on each side by a ring-shaped HslU homohexamer. The assembly of the HslU/HslV complex is dependent on binding of ATP.

It is found in the cytoplasm. It catalyses the reaction ATP-dependent cleavage of peptide bonds with broad specificity.. Its activity is regulated as follows. Allosterically activated by HslU binding. Protease subunit of a proteasome-like degradation complex believed to be a general protein degrading machinery. The sequence is that of ATP-dependent protease subunit HslV from Coxiella burnetii (strain RSA 493 / Nine Mile phase I).